Here is a 347-residue protein sequence, read N- to C-terminus: Protein FAM50 homolog (347 aa).

A compositionally biased stretch (basic and acidic residues) spans 77 to 113 (EDIVREREKKLAQKKEEKDREKLKALEAKQAEKDRQR). Residues 77-142 (EDIVREREKK…EDEEEPLEIK (66 aa)) form a disordered region. Positions 123 to 138 (PEEDEESFDDEDEEEP) are enriched in acidic residues.

The protein belongs to the FAM50 family.

The sequence is that of Protein FAM50 homolog from Aedes aegypti (Yellowfever mosquito).